Consider the following 32-residue polypeptide: Cytochrome b6-f complex subunit 7 (32 aa).

A helical membrane pass occupies residues 9–27 (AAVFWILIPIGLVGGALLL).

This sequence belongs to the PetM family. The 4 large subunits of the cytochrome b6-f complex are cytochrome b6, subunit IV (17 kDa polypeptide, PetD), cytochrome f and the Rieske protein, while the 4 small subunits are PetG, PetL, PetM and PetN. The complex functions as a dimer.

Its subcellular location is the cellular thylakoid membrane. Component of the cytochrome b6-f complex, which mediates electron transfer between photosystem II (PSII) and photosystem I (PSI), cyclic electron flow around PSI, and state transitions. This chain is Cytochrome b6-f complex subunit 7, found in Prochlorococcus marinus (strain MIT 9301).